Here is a 266-residue protein sequence, read N- to C-terminus: Imidazole glycerol phosphate synthase subunit HisF (266 aa).

Residues Asp11 and Asp130 contribute to the active site. The interval Arg134 to Ser157 is disordered.

It belongs to the HisA/HisF family. Heterodimer of HisH and HisF.

The protein localises to the cytoplasm. The catalysed reaction is 5-[(5-phospho-1-deoxy-D-ribulos-1-ylimino)methylamino]-1-(5-phospho-beta-D-ribosyl)imidazole-4-carboxamide + L-glutamine = D-erythro-1-(imidazol-4-yl)glycerol 3-phosphate + 5-amino-1-(5-phospho-beta-D-ribosyl)imidazole-4-carboxamide + L-glutamate + H(+). It functions in the pathway amino-acid biosynthesis; L-histidine biosynthesis; L-histidine from 5-phospho-alpha-D-ribose 1-diphosphate: step 5/9. In terms of biological role, IGPS catalyzes the conversion of PRFAR and glutamine to IGP, AICAR and glutamate. The HisF subunit catalyzes the cyclization activity that produces IGP and AICAR from PRFAR using the ammonia provided by the HisH subunit. In Paracidovorax citrulli (strain AAC00-1) (Acidovorax citrulli), this protein is Imidazole glycerol phosphate synthase subunit HisF.